Reading from the N-terminus, the 520-residue chain is ATP synthase subunit alpha 2 (520 aa).

An ATP-binding site is contributed by 176–183 (GDRQTGKT).

Belongs to the ATPase alpha/beta chains family. F-type ATPases have 2 components, CF(1) - the catalytic core - and CF(0) - the membrane proton channel. CF(1) has five subunits: alpha(3), beta(3), gamma(1), delta(1), epsilon(1). CF(0) has three main subunits: a(1), b(2) and c(9-12). The alpha and beta chains form an alternating ring which encloses part of the gamma chain. CF(1) is attached to CF(0) by a central stalk formed by the gamma and epsilon chains, while a peripheral stalk is formed by the delta and b chains.

Its subcellular location is the cell inner membrane. It carries out the reaction ATP + H2O + 4 H(+)(in) = ADP + phosphate + 5 H(+)(out). In terms of biological role, produces ATP from ADP in the presence of a proton gradient across the membrane. The alpha chain is a regulatory subunit. This Polaromonas naphthalenivorans (strain CJ2) protein is ATP synthase subunit alpha 2.